We begin with the raw amino-acid sequence, 498 residues long: DEAD-box ATP-dependent RNA helicase 6 (498 aa).

Residues 1–109 (MDPRARYPPG…WKAQLKLPPQ (109 aa)) are disordered. Over residues 33–49 (QHQHQHQQPPHPHHHQY) the composition is skewed to basic residues. 2 stretches are compositionally biased toward low complexity: residues 50-61 (VQRQPQPQQTPH) and 75-86 (AAEAAGASEQKA). The Q motif motif lies at 124 to 152 (NEFEDYFLKRELLMGIYEKGFERPSPIQE). In terms of domain architecture, Helicase ATP-binding spans 155-325 (IPIALTGSDI…DKYLPKPYVI (171 aa)). 168–175 (AKNGTGKT) serves as a coordination point for ATP. The DEAD box signature appears at 273-276 (DEAD). Positions 335–495 (GITQFYAFVE…PIPPQIDRAI (161 aa)) constitute a Helicase C-terminal domain.

The protein belongs to the DEAD box helicase family. DDX6/DHH1 subfamily.

It localises to the cytoplasm. It is found in the P-body. The enzyme catalyses ATP + H2O = ADP + phosphate + H(+). ATP-dependent RNA helicase involved in mRNA turnover, and more specifically in mRNA decapping. The sequence is that of DEAD-box ATP-dependent RNA helicase 6 from Oryza sativa subsp. japonica (Rice).